Here is a 221-residue protein sequence, read N- to C-terminus: NAD(P)H-hydrate epimerase (221 aa).

The YjeF N-terminal domain maps to 10 to 210 (MQQIDNYTIE…DVGMLIPDDF (201 aa)). Position 58 to 62 (58 to 62 (NNGAD)) interacts with (6S)-NADPHX. K(+)-binding residues include asparagine 59 and aspartate 120. Residues 124-130 (GVGLNNV) and aspartate 153 contribute to the (6S)-NADPHX site. Threonine 156 contributes to the K(+) binding site.

Belongs to the NnrE/AIBP family. K(+) is required as a cofactor.

The catalysed reaction is (6R)-NADHX = (6S)-NADHX. The enzyme catalyses (6R)-NADPHX = (6S)-NADPHX. Its function is as follows. Catalyzes the epimerization of the S- and R-forms of NAD(P)HX, a damaged form of NAD(P)H that is a result of enzymatic or heat-dependent hydration. This is a prerequisite for the S-specific NAD(P)H-hydrate dehydratase to allow the repair of both epimers of NAD(P)HX. This Leuconostoc mesenteroides subsp. mesenteroides (strain ATCC 8293 / DSM 20343 / BCRC 11652 / CCM 1803 / JCM 6124 / NCDO 523 / NBRC 100496 / NCIMB 8023 / NCTC 12954 / NRRL B-1118 / 37Y) protein is NAD(P)H-hydrate epimerase.